Consider the following 63-residue polypeptide: SERF-like protein C1705.02 (63 aa).

The segment covering 1–13 (MSRGNQRDVDRAR) has biased composition (basic and acidic residues). Residues 1–63 (MSRGNQRDVD…EANGGSKGKK (63 aa)) are disordered. The span at 14-24 (NLKKSQASKKK) shows a compositional bias: basic residues. The span at 25–35 (QAGDPTKRLEA) shows a compositional bias: basic and acidic residues.

This sequence belongs to the SERF family.

It is found in the cytoplasm. The protein localises to the nucleus. It localises to the nucleolus. The protein is SERF-like protein C1705.02 of Schizosaccharomyces pombe (strain 972 / ATCC 24843) (Fission yeast).